A 449-amino-acid chain; its full sequence is MFS-type transporter 1 (449 aa).

Over residues 1-37 (MTHSSSNEHEKEDDRRASDDMMDRDDQNAKEEQDVSK) the composition is skewed to basic and acidic residues. The disordered stretch occupies residues 1–43 (MTHSSSNEHEKEDDRRASDDMMDRDDQNAKEEQDVSKDAPPVN). 6 helical membrane-spanning segments follow: residues 61–81 (VAGGFCSLFCSFGWINCIGIF), 97–117 (TISWIASLELFILFAGGLVVG), 127–147 (YILLFGTFMHVFGLMMASLST), 152–172 (ILLSQGICSPIGISCLFTPAV), 185–205 (LANGIVAAGSSLGGVIFPIMF), and 212–232 (VGFPWAMRIGAFLILFLLIIA). Asparagine 233 carries N-linked (GlcNAc...) asparagine glycosylation. 6 helical membrane passes run 262-282 (LLTTIAAMIFVLGLFLPINYI), 298-318 (YLIPILNAASLFGRTVPGFVA), 326-346 (VHTFMCFFSSVVAFALWLPAA), 349-369 (APIIVFAALYGFGSGAFVAIL), 390-410 (FGVLSLPALVSNPIGGAFVAH), and 420-440 (IWTGCITMLGAILFVVARISL).

This sequence belongs to the major facilitator superfamily. Monocarboxylate porter (TC 2.A.1.13) family.

It localises to the cell membrane. The enzyme catalyses erythrostominone(in) = erythrostominone(out). The catalysed reaction is deoxyerythrostominone(in) = deoxyerythrostominone(out). It carries out the reaction epierythrostominol(in) = epierythrostominol(out). It catalyses the reaction deoxyerythrostominol(in) = deoxyerythrostominol(out). Functionally, MFS-type transporter that mediates the secretion of the 4 major naphthoquinone derivatives produced, erythrostominone (NQ1), deoxyerythrostominone (NQ2), epierythrostominol (NQ4), and deoxyerythrostominol (NQ5), as well as of 3 newly identified naphthoquinone derivatives termed NQ7, NQ8 and NQ9. The sequence is that of MFS-type transporter 1 from Ophiocordyceps sp. (strain BCC 1869) (Entomopathogenic fungus).